Reading from the N-terminus, the 750-residue chain is Photosystem I P700 chlorophyll a apoprotein A1 (750 aa).

8 helical membrane-spanning segments follow: residues 70 to 93 (VFSAHFGQLSIIFLWLSGMYFHGA), 156 to 179 (LYCTAIGALIFASLMLFAGWFHYH), 195 to 219 (LNHHLAGLLGLGSLSWAGHQIHVSL), 291 to 309 (IAHHHLAIAILFLIAGHMY), 346 to 369 (WHAQLSLNLAMLGSTTIVVAHHMY), 385 to 411 (LSLFTHHMWIGGFLIVGAAAHAAIFMV), 433 to 455 (AIISHLNWVCIFLGFHSFGLYIH), and 531 to 549 (FLVHHIHAFTIHVTVLILL). Positions 573 and 582 each coordinate [4Fe-4S] cluster. 2 consecutive transmembrane segments (helical) span residues 589–610 (HVFLGLFWMYNSISVVIFHFSW) and 664–686 (LSAYGLFFLGAHFVWAFSLMFLF). Residue His675 coordinates chlorophyll a'. Chlorophyll a-binding residues include Met683 and Tyr691. Trp692 lines the phylloquinone pocket. Residues 724–744 (AVGVTHYLLGGIATTWAFFLA) form a helical membrane-spanning segment.

The protein belongs to the PsaA/PsaB family. In terms of assembly, the PsaA/B heterodimer binds the P700 chlorophyll special pair and subsequent electron acceptors. PSI consists of a core antenna complex that captures photons, and an electron transfer chain that converts photonic excitation into a charge separation. The eukaryotic PSI reaction center is composed of at least 11 subunits. It depends on P700 is a chlorophyll a/chlorophyll a' dimer, A0 is one or more chlorophyll a, A1 is one or both phylloquinones and FX is a shared 4Fe-4S iron-sulfur center. as a cofactor.

It localises to the plastid. The protein localises to the chloroplast thylakoid membrane. It catalyses the reaction reduced [plastocyanin] + hnu + oxidized [2Fe-2S]-[ferredoxin] = oxidized [plastocyanin] + reduced [2Fe-2S]-[ferredoxin]. PsaA and PsaB bind P700, the primary electron donor of photosystem I (PSI), as well as the electron acceptors A0, A1 and FX. PSI is a plastocyanin-ferredoxin oxidoreductase, converting photonic excitation into a charge separation, which transfers an electron from the donor P700 chlorophyll pair to the spectroscopically characterized acceptors A0, A1, FX, FA and FB in turn. Oxidized P700 is reduced on the lumenal side of the thylakoid membrane by plastocyanin. This is Photosystem I P700 chlorophyll a apoprotein A1 from Saccharum hybrid (Sugarcane).